Here is a 312-residue protein sequence, read N- to C-terminus: 4-diphosphocytidyl-2-C-methyl-D-erythritol kinase (312 aa).

The active site involves Lys-16. Pro-101–Ser-111 is a binding site for ATP. Asp-143 is an active-site residue.

It belongs to the GHMP kinase family. IspE subfamily.

The enzyme catalyses 4-CDP-2-C-methyl-D-erythritol + ATP = 4-CDP-2-C-methyl-D-erythritol 2-phosphate + ADP + H(+). The protein operates within isoprenoid biosynthesis; isopentenyl diphosphate biosynthesis via DXP pathway; isopentenyl diphosphate from 1-deoxy-D-xylulose 5-phosphate: step 3/6. Catalyzes the phosphorylation of the position 2 hydroxy group of 4-diphosphocytidyl-2C-methyl-D-erythritol. The protein is 4-diphosphocytidyl-2-C-methyl-D-erythritol kinase of Prochlorococcus marinus subsp. pastoris (strain CCMP1986 / NIES-2087 / MED4).